A 327-amino-acid polypeptide reads, in one-letter code: Serine/threonine-protein phosphatase PP1-beta catalytic subunit (327 aa).

Ala-2 bears the N-acetylalanine mark. Mn(2+)-binding residues include Asp-63, His-65, Asp-91, and Asn-123. The active-site Proton donor is His-124. Mn(2+) contacts are provided by His-172 and His-247. A disordered region spans residues 305–327 (QYGGLNSGRPVTPPRTANPPKKR).

It belongs to the PPP phosphatase family. PP-1 subfamily. It depends on Mn(2+) as a cofactor.

Its subcellular location is the cytoplasm. The protein localises to the nucleus. The enzyme catalyses O-phospho-L-seryl-[protein] + H2O = L-seryl-[protein] + phosphate. The catalysed reaction is O-phospho-L-threonyl-[protein] + H2O = L-threonyl-[protein] + phosphate. Its function is as follows. Protein phosphatase that associates with over 200 regulatory proteins to form highly specific holoenzymes which dephosphorylate hundreds of biological targets. Protein phosphatase (PP1) is essential for cell division, it participates in the regulation of glycogen metabolism, muscle contractility and protein synthesis. Involved in regulation of ionic conductances and long-term synaptic plasticity. In Xenopus laevis (African clawed frog), this protein is Serine/threonine-protein phosphatase PP1-beta catalytic subunit (ppp1cb).